We begin with the raw amino-acid sequence, 89 residues long: Small ribosomal subunit protein uS15 (89 aa).

Belongs to the universal ribosomal protein uS15 family. In terms of assembly, part of the 30S ribosomal subunit. Forms a bridge to the 50S subunit in the 70S ribosome, contacting the 23S rRNA.

One of the primary rRNA binding proteins, it binds directly to 16S rRNA where it helps nucleate assembly of the platform of the 30S subunit by binding and bridging several RNA helices of the 16S rRNA. In terms of biological role, forms an intersubunit bridge (bridge B4) with the 23S rRNA of the 50S subunit in the ribosome. The sequence is that of Small ribosomal subunit protein uS15 from Streptococcus thermophilus (strain CNRZ 1066).